The primary structure comprises 336 residues: UPF0065 protein in tcbD-tcbE intergenic region (336 aa).

Positions 1-32 are cleaved as a signal peptide; the sequence is MHSSKCPDLANIGRRRVLAGIALAMTTSSTRA.

It belongs to the UPF0065 (bug) family.

The protein localises to the periplasm. In Pseudomonas sp. (strain P51), this protein is UPF0065 protein in tcbD-tcbE intergenic region.